The sequence spans 164 residues: CB1 cannabinoid receptor-interacting protein 1 (164 aa).

This sequence belongs to the CNRIP family. In terms of assembly, interacts with the cannabinoid receptor CNR1 (via C-terminus). Does not interact with cannabinoid receptor CNR2.

In terms of biological role, suppresses cannabinoid receptor CNR1-mediated tonic inhibition of voltage-gated calcium channels. The protein is CB1 cannabinoid receptor-interacting protein 1 (CNRIP1) of Bos taurus (Bovine).